The primary structure comprises 638 residues: NBPF family member NBPF6 (638 aa).

Coiled-coil stretches lie at residues 10-43 (SERA…EKFL) and 69-115 (DSVL…KLRE). The segment at 157–285 (HLVHKLSPEN…VPPRHHDKSN (129 aa)) is disordered. Acidic residues predominate over residues 165–179 (ENDEDEDEDEDDKDE). The Olduvai 1 domain occupies 174 to 261 (EDDKDEEVEK…EEEEALNIPP (88 aa)). Over residues 192 to 202 (EVQKTEEKEVP) the composition is skewed to basic and acidic residues. Residues 214-226 (SNSHNPSNSNQPH) show a composition bias toward low complexity. Basic and acidic residues-rich tracts occupy residues 232–251 (TFKE…HPHD) and 264–273 (QNDHEEEEGK). Olduvai domains follow at residues 326-399 (EKQS…ALVD) and 400-503 (KIKK…SQAQ). The interval 563–584 (MKNPPQLEDDALEGSASNTQGR) is disordered.

Belongs to the NBPF family.

It is found in the cytoplasm. The sequence is that of NBPF family member NBPF6 from Homo sapiens (Human).